A 343-amino-acid polypeptide reads, in one-letter code: 4-hydroxy-2-oxovalerate aldolase (343 aa).

Positions 4 to 254 (PRLTDTTLRD…NPGLDVFGLM (251 aa)) constitute a Pyruvate carboxyltransferase domain. Residue 12-13 (RD) coordinates substrate. Mn(2+) is bound at residue Asp-13. The Proton acceptor role is filled by His-16. Substrate is bound by residues Ser-166 and His-193. Mn(2+) contacts are provided by His-193 and His-195. Residue Tyr-284 participates in substrate binding.

It belongs to the 4-hydroxy-2-oxovalerate aldolase family.

The enzyme catalyses (S)-4-hydroxy-2-oxopentanoate = acetaldehyde + pyruvate. In Chloroflexus aggregans (strain MD-66 / DSM 9485), this protein is 4-hydroxy-2-oxovalerate aldolase.